The sequence spans 739 residues: Polyphosphate kinase (739 aa).

The segment at 22–45 (WHSDNSALAAPPAATTSASQDQLP) is disordered. Positions 27 to 40 (SALAAPPAATTSAS) are enriched in low complexity. ATP is bound at residue Asn-87. 2 residues coordinate Mg(2+): Arg-428 and Arg-458. His-488 serves as the catalytic Phosphohistidine intermediate. 3 residues coordinate ATP: Tyr-521, Arg-621, and His-649. The interval 714–739 (QWTASPQKGQQVRDHQESLMERHRSR) is disordered. The span at 724-739 (QVRDHQESLMERHRSR) shows a compositional bias: basic and acidic residues.

It belongs to the polyphosphate kinase 1 (PPK1) family. Mg(2+) is required as a cofactor. In terms of processing, an intermediate of this reaction is the autophosphorylated ppk in which a phosphate is covalently linked to a histidine residue through a N-P bond.

It carries out the reaction [phosphate](n) + ATP = [phosphate](n+1) + ADP. Catalyzes the reversible transfer of the terminal phosphate of ATP to form a long-chain polyphosphate (polyP). In Mycobacterium leprae (strain TN), this protein is Polyphosphate kinase.